The sequence spans 196 residues: UPF0319 protein VV0948 (196 aa).

The N-terminal stretch at 1-19 (MKKMMILSALALFSSSLFA) is a signal peptide.

It belongs to the UPF0319 family.

In Vibrio vulnificus (strain YJ016), this protein is UPF0319 protein VV0948.